Consider the following 346-residue polypeptide: Glycerol-3-phosphate dehydrogenase [NAD(P)+] (346 aa).

NADPH contacts are provided by S15, W16, R36, and K110. Residues K110, G139, and S141 each contribute to the sn-glycerol 3-phosphate site. Residue A143 coordinates NADPH. Positions 194, 247, 257, 258, and 259 each coordinate sn-glycerol 3-phosphate. The active-site Proton acceptor is the K194. NADPH is bound at residue R258. V282 and E284 together coordinate NADPH.

The protein belongs to the NAD-dependent glycerol-3-phosphate dehydrogenase family.

It is found in the cytoplasm. The enzyme catalyses sn-glycerol 3-phosphate + NAD(+) = dihydroxyacetone phosphate + NADH + H(+). The catalysed reaction is sn-glycerol 3-phosphate + NADP(+) = dihydroxyacetone phosphate + NADPH + H(+). Its pathway is membrane lipid metabolism; glycerophospholipid metabolism. In terms of biological role, catalyzes the reduction of the glycolytic intermediate dihydroxyacetone phosphate (DHAP) to sn-glycerol 3-phosphate (G3P), the key precursor for phospholipid synthesis. In Xylella fastidiosa (strain M23), this protein is Glycerol-3-phosphate dehydrogenase [NAD(P)+].